We begin with the raw amino-acid sequence, 134 residues long: Large ribosomal subunit protein uL16c (134 aa).

Belongs to the universal ribosomal protein uL16 family. As to quaternary structure, part of the 50S ribosomal subunit.

It is found in the plastid. Its subcellular location is the chloroplast. This Atropa belladonna (Belladonna) protein is Large ribosomal subunit protein uL16c.